A 1034-amino-acid polypeptide reads, in one-letter code: Teashirt homolog 2 (1034 aa).

The interval 1 to 90 is disordered; sequence MPRRKQQAPK…NESLLSDASD (90 aa). Positions 13–38 form a coiled coil; sequence AGYAQEEQLKEEEEIKEEEEEEDSGS. Over residues 21 to 36 the composition is skewed to acidic residues; the sequence is LKEEEEIKEEEEEEDS. Residues 65–90 are compositionally biased toward polar residues; that stretch reads SYQNSPGSHLSNQDAENESLLSDASD. A Glycyl lysine isopeptide (Lys-Gly) (interchain with G-Cter in SUMO2) cross-link involves residue Lys188. 2 C2H2-type zinc fingers span residues 215-239 and 275-299; these read FRCR…ETGH and LKCM…KTKH. Residues 239–265 are disordered; that stretch reads HYQDDNRKKDKLRPTSYSKPRKRAFQD. Residues Lys306 and Lys315 each participate in a glycyl lysine isopeptide (Lys-Gly) (interchain with G-Cter in SUMO2) cross-link. The C2H2-type 3; atypical zinc-finger motif lies at 380–404; sequence LKCMECGSSHDTLQQLTTHMMVTGH. A Glycyl lysine isopeptide (Lys-Gly) (interchain with G-Cter in SUMO2) cross-link involves residue Lys417. The span at 432–455 shows a compositional bias: polar residues; it reads LSEAPNSDSLAPKPSSNSASDCTA. Residues 432 to 496 form a disordered region; sequence LSEAPNSDSL…PLQKPLDPTI (65 aa). Residues 459 to 482 are compositionally biased toward basic and acidic residues; it reads ELKKESKKERPEETSKDEKVVKSE. Residues Lys461, Lys480, Lys497, Lys601, and Lys652 each participate in a glycyl lysine isopeptide (Lys-Gly) (interchain with G-Cter in SUMO2) cross-link. Disordered regions lie at residues 598-676 and 763-789; these read TQVK…TSAL and QPID…PPQK. A compositionally biased stretch (basic and acidic residues) spans 600–668; it reads VKKESEDKDE…KEGSEKEKPQ (69 aa). Glycyl lysine isopeptide (Lys-Gly) (interchain with G-Cter in SUMO2) cross-links involve residues Lys800 and Lys820. The segment at residues 841–911 is a DNA-binding region (homeobox; atypical); that stretch reads RKGRQSNWNP…NVKYQLRKTG (71 aa). A C2H2-type 4 zinc finger spans residues 926-948; the sequence is FYCSDCASQFRTPSTYISHLESH. Residue Lys966 forms a Glycyl lysine isopeptide (Lys-Gly) (interchain with G-Cter in SUMO2) linkage. A Phosphoserine modification is found at Ser980. Residues 994-1017 form a C2H2-type 5 zinc finger; that stretch reads FKCKLCCRTFVSKHAVKLHLSKTH. The segment at 1014–1034 is disordered; sequence SKTHSKSPEHHSQFVTDVDEE.

It belongs to the teashirt C2H2-type zinc-finger protein family. As to quaternary structure, interacts (via homeobox domain) with APBB1 (via PID domain 1). Sumoylated. Expressed in brain; strongly reduced in post-mortem elderly subjects with Alzheimer disease.

The protein resides in the nucleus. In terms of biological role, probable transcriptional regulator involved in developmental processes. May act as a transcriptional repressor (Potential). In Homo sapiens (Human), this protein is Teashirt homolog 2 (TSHZ2).